The sequence spans 414 residues: Gamma-glutamyl phosphate reductase (414 aa).

It belongs to the gamma-glutamyl phosphate reductase family.

The protein resides in the cytoplasm. It carries out the reaction L-glutamate 5-semialdehyde + phosphate + NADP(+) = L-glutamyl 5-phosphate + NADPH + H(+). It functions in the pathway amino-acid biosynthesis; L-proline biosynthesis; L-glutamate 5-semialdehyde from L-glutamate: step 2/2. Its function is as follows. Catalyzes the NADPH-dependent reduction of L-glutamate 5-phosphate into L-glutamate 5-semialdehyde and phosphate. The product spontaneously undergoes cyclization to form 1-pyrroline-5-carboxylate. The chain is Gamma-glutamyl phosphate reductase from Xanthomonas oryzae pv. oryzae (strain MAFF 311018).